Consider the following 139-residue polypeptide: Mitochondrial intermembrane space import and assembly protein 40 (139 aa).

3 cysteine pairs are disulfide-bonded: Cys53-Cys55, Cys64-Cys97, and Cys74-Cys87. One can recognise a CHCH domain in the interval Ser61 to Tyr105. 2 consecutive short sequence motifs (cx9C motif) follow at residues Cys64–Cys74 and Cys87–Cys97. Residues Leu104–Ser139 are disordered. Residues Pro106–Thr124 are compositionally biased toward acidic residues.

As to quaternary structure, monomer. Can form homooligomers. Interacts with GFER and forms transient disulfide bonds with GFER. Interacts with MICU1. Interacts with COX19 forming transient intermolecular disulfide bridges. Interacts with COA7 through transient intermolecular disulfide bonds. Interacts with AIFM1; the interaction increases in presence of NADH. Interacts with NDUFB10. Post-translationally, forms intrachain disulfide bridges, but exists in different redox states.

Its subcellular location is the mitochondrion intermembrane space. Its function is as follows. Central component of a redox-sensitive mitochondrial intermembrane space import machinery which is required for the biogenesis of respiratory chain complexes. Functions as a chaperone and catalyzes the formation of disulfide bonds in substrate proteins, such as COX17, COX19, MICU1 and COA7. Required for the import and folding of small cysteine-containing proteins (small Tim) in the mitochondrial intermembrane space (IMS). Required for the import of COA7 in the IMS. Precursor proteins to be imported into the IMS are translocated in their reduced form into the mitochondria. The oxidized form of CHCHD4/MIA40 forms a transient intermolecular disulfide bridge with the reduced precursor protein, resulting in oxidation of the precursor protein that now contains an intramolecular disulfide bond and is able to undergo folding in the IMS. Reduced CHCHD4/MIA40 is then reoxidized by GFER/ERV1 via a disulfide relay system. Mediates formation of disulfide bond in MICU1 in the IMS, promoting formation of the MICU1-MICU2 heterodimer that regulates mitochondrial calcium uptake. This Rattus norvegicus (Rat) protein is Mitochondrial intermembrane space import and assembly protein 40 (Chchd4).